The sequence spans 189 residues: Ribosome maturation factor RimM (189 aa).

In terms of domain architecture, PRC barrel spans Glu95–Leu177.

It belongs to the RimM family. As to quaternary structure, binds ribosomal protein uS19.

The protein localises to the cytoplasm. An accessory protein needed during the final step in the assembly of 30S ribosomal subunit, possibly for assembly of the head region. Essential for efficient processing of 16S rRNA. May be needed both before and after RbfA during the maturation of 16S rRNA. It has affinity for free ribosomal 30S subunits but not for 70S ribosomes. The chain is Ribosome maturation factor RimM from Rhizobium leguminosarum bv. trifolii (strain WSM2304).